The primary structure comprises 508 residues: Methionine--tRNA ligase (508 aa).

A 'HIGH' region motif is present at residues 12 to 22 (YYVNDIPHIGH). The short motif at 295-299 (KISKS) is the 'KMSKS' region element. Position 298 (K298) interacts with ATP.

It belongs to the class-I aminoacyl-tRNA synthetase family. MetG type 2B subfamily. Monomer.

It localises to the cytoplasm. It carries out the reaction tRNA(Met) + L-methionine + ATP = L-methionyl-tRNA(Met) + AMP + diphosphate. Its function is as follows. Is required not only for elongation of protein synthesis but also for the initiation of all mRNA translation through initiator tRNA(fMet) aminoacylation. This is Methionine--tRNA ligase from Rickettsia conorii (strain ATCC VR-613 / Malish 7).